We begin with the raw amino-acid sequence, 206 residues long: Venom allergen 5 2 (206 aa).

4 disulfide bridges follow: cysteine 4–cysteine 16, cysteine 8–cysteine 104, cysteine 28–cysteine 96, and cysteine 172–cysteine 189. The SCP domain occupies 48 to 191; sequence DEHNRFRQKV…MKSHYLVCNY (144 aa).

This sequence belongs to the CRISP family. Venom allergen 5-like subfamily. As to expression, expressed by the venom gland.

It localises to the secreted. The sequence is that of Venom allergen 5 2 from Polybia paulista (Neotropical social wasp).